The sequence spans 377 residues: D-alanine--D-alanine ligase (377 aa).

The region spanning 141–347 (KRILNQAGIR…YSELIDRLIQ (207 aa)) is the ATP-grasp domain. An ATP-binding site is contributed by 171 to 226 (KEELGDLVFVKPAKQGSSVGIHKVDTEEEYETAMKDAFTYDYKVLVEAGIKNPREI). Mg(2+) contacts are provided by Asp-301, Glu-314, and Asn-316.

This sequence belongs to the D-alanine--D-alanine ligase family. It depends on Mg(2+) as a cofactor. Mn(2+) serves as cofactor.

It localises to the cytoplasm. The catalysed reaction is 2 D-alanine + ATP = D-alanyl-D-alanine + ADP + phosphate + H(+). It functions in the pathway cell wall biogenesis; peptidoglycan biosynthesis. Its function is as follows. Cell wall formation. This chain is D-alanine--D-alanine ligase, found in Limosilactobacillus fermentum (strain NBRC 3956 / LMG 18251) (Lactobacillus fermentum).